We begin with the raw amino-acid sequence, 160 residues long: Eukaryotic translation initiation factor 5A-2 (160 aa).

Residues 1-12 (MSDEEHHFESKA) are compositionally biased toward basic and acidic residues. Residues 1–21 (MSDEEHHFESKADAGASKTFP) are disordered. A Hypusine modification is found at K52.

Belongs to the eIF-5A family. Post-translationally, lys-52 undergoes hypusination, a unique post-translational modification that consists in the addition of a butylamino group from spermidine to lysine side chain, leading to the formation of the unusual amino acid hypusine. eIF-5As are the only known proteins to undergo this modification, which is essential for their function.

Functionally, translation factor that promotes translation elongation and termination, particularly upon ribosome stalling at specific amino acid sequence contexts. Binds between the exit (E) and peptidyl (P) site of the ribosome and promotes rescue of stalled ribosome: specifically required for efficient translation of polyproline-containing peptides as well as other motifs that stall the ribosome. Acts as a ribosome quality control (RQC) cofactor by joining the RQC complex to facilitate peptidyl transfer during CAT tailing step. This Solanum lycopersicum (Tomato) protein is Eukaryotic translation initiation factor 5A-2.